A 438-amino-acid chain; its full sequence is GDP-mannose 6-dehydrogenase (438 aa).

NAD(+)-binding residues include Tyr-10, Val-11, Asp-30, Lys-35, Thr-86, and Thr-124. The GDP-alpha-D-mannuronate site is built by Glu-161, Lys-210, Asn-214, His-217, Asn-225, Tyr-256, Tyr-257, Arg-259, Phe-262, and Gly-265. Cys-268 is an active-site residue. Residue Lys-271 coordinates NAD(+). Lys-324 contributes to the GDP-alpha-D-mannuronate binding site. Residue Arg-331 participates in NAD(+) binding.

This sequence belongs to the UDP-glucose/GDP-mannose dehydrogenase family.

The enzyme catalyses GDP-alpha-D-mannose + 2 NAD(+) + H2O = GDP-alpha-D-mannuronate + 2 NADH + 3 H(+). It functions in the pathway glycan biosynthesis; alginate biosynthesis. In terms of biological role, catalyzes the oxidation of guanosine diphospho-D-mannose (GDP-D-mannose) to GDP-D-mannuronic acid, a precursor for alginate polymerization. The alginate layer causes a mucoid phenotype and provides a protective barrier against host immune defenses and antibiotics. The polypeptide is GDP-mannose 6-dehydrogenase (algD) (Pseudomonas putida (strain ATCC 47054 / DSM 6125 / CFBP 8728 / NCIMB 11950 / KT2440)).